The chain runs to 750 residues: Cellulose synthase-like protein H1 (750 aa).

The next 2 helical transmembrane spans lie at 27 to 47 (LAILFLLLALLLHRVLHDSGA) and 52 to 72 (AALACEAWFTFMWLLNVNAKW). Catalysis depends on residues Asp137 and Asp459. The next 6 helical transmembrane spans lie at 537–557 (VWPVRAPFELCYALLGPYCLL), 570–590 (GFYIALALFIAYNTYMFMEFI), 608–628 (ITSASAWLLAFLTVILKTLGF), 664–684 (VFIPVTALAMLSVIAIAVGAW), 697–717 (GPGISEFISCGWLVLCFMPLL), and 727–747 (GIPWSIKMKACLLVAIFLLFC).

Belongs to the glycosyltransferase 2 family. Plant cellulose synthase-like H subfamily.

The protein localises to the golgi apparatus membrane. Its function is as follows. Thought to be a Golgi-localized beta-glycan synthase that polymerize the backbones of noncellulosic polysaccharides (hemicelluloses) of plant cell wall. The sequence is that of Cellulose synthase-like protein H1 (CSLH1) from Oryza sativa subsp. japonica (Rice).